A 445-amino-acid polypeptide reads, in one-letter code: Phosphoglucosamine mutase (445 aa).

Ser-102 functions as the Phosphoserine intermediate in the catalytic mechanism. 4 residues coordinate Mg(2+): Ser-102, Asp-241, Asp-243, and Asp-245. Ser-102 bears the Phosphoserine mark.

The protein belongs to the phosphohexose mutase family. Requires Mg(2+) as cofactor. Post-translationally, activated by phosphorylation.

The catalysed reaction is alpha-D-glucosamine 1-phosphate = D-glucosamine 6-phosphate. In terms of biological role, catalyzes the conversion of glucosamine-6-phosphate to glucosamine-1-phosphate. The chain is Phosphoglucosamine mutase from Sodalis glossinidius (strain morsitans).